The sequence spans 333 residues: MVSLKTVQASNAGLRALPNITALFVGGTSGIGQSTLRQLARYADSPTAYIIGRNEARTRPFLSELQQLNPKGRFHFIEADVSLVRNVDAACQQILQQQKKLNFLFMTPGGISLGGRNETVEGIDYLFALRYYSRMRFIQNLLPLLEASSPSRVISVYGGGFEYSINTADLDLKHNFSLLNAYKHSITMTSLSMEHLARTHPAVSFIHVYPGLVGTNIYTNSFPAPVSTFYNYLVWPFMKPFSVDLGESGERHLFHLSSAHYPAKQGIVPQGVPLEAGEVAKGITGEPGSGAYLLNWKGDVRPSTKILAQYREQKIPQLVWDHTESLMDQAVHR.

The protein belongs to the NmrA-type oxidoreductase family.

It functions in the pathway secondary metabolite biosynthesis; terpenoid biosynthesis. Oxidoreductase; part of the gene cluster that mediates the biosynthesis of the diterpene ent-pimara-8(14),15-diene (PD). Within the cluster, the HMG-CoA reductase AN1593 functions in the mevalonate pathway, which produces isoprenoid precursors. The geranylgeranyl pyrophosphate (GGPP) synthase AN1592 is needed in the formation of GGPP, the precursor for diterpenes. Lastly, the pimaradiene synthase pbcA performs the 2 cyclization steps that convert GGPP to ent-pimara-8(14),15-diene. The putative roles of the remaining cluster enzymes in ent-pimara-8(14),15-diene biosynthesis is unclear. The cytochrome P450 monooxygenase AN1598, the glutathione S-transferase AN1595, the oxidoreductases AN1596 and AN1597 probably function as decorative enzymes. It is possible that in biological conditions the compound is oxidized to ent-pimara-8(14),15-dien-19-oic acid, which is a bioactive diterpene compound predominant in many plant extracts. This is Oxidoreductase AN1596 from Emericella nidulans (strain FGSC A4 / ATCC 38163 / CBS 112.46 / NRRL 194 / M139) (Aspergillus nidulans).